The chain runs to 265 residues: 5'-nucleotidase SurE (265 aa).

Positions 8, 9, 40, and 98 each coordinate a divalent metal cation.

This sequence belongs to the SurE nucleotidase family. A divalent metal cation serves as cofactor.

The protein resides in the cytoplasm. The catalysed reaction is a ribonucleoside 5'-phosphate + H2O = a ribonucleoside + phosphate. Nucleotidase that shows phosphatase activity on nucleoside 5'-monophosphates. The polypeptide is 5'-nucleotidase SurE (Nostoc sp. (strain PCC 7120 / SAG 25.82 / UTEX 2576)).